Reading from the N-terminus, the 176-residue chain is Ribosome maturation factor RimM (176 aa).

One can recognise a PRC barrel domain in the interval 93–172; that stretch reads EGEFFYFDVL…EILTKDAKSI (80 aa).

Belongs to the RimM family. Binds ribosomal protein uS19.

It localises to the cytoplasm. Its function is as follows. An accessory protein needed during the final step in the assembly of 30S ribosomal subunit, possibly for assembly of the head region. Essential for efficient processing of 16S rRNA. May be needed both before and after RbfA during the maturation of 16S rRNA. It has affinity for free ribosomal 30S subunits but not for 70S ribosomes. This Campylobacter curvus (strain 525.92) protein is Ribosome maturation factor RimM.